The chain runs to 275 residues: MSLILAVYGKGGIGKSTTTANISAALALKGAKVLQIGCDPKHDSTFPLTGTLQKTVIEALEEVDFHHEELTEEDIILTGFGGVDALEAGGPPAGSGCGGYVVGEAVKLLQELGVYDRYDVILFDVLGDVVCGGFSAPLNFADYAVIIATNDFDSIFAANRLCMAIEQKSTRYKVKLAGIVANRVDYVKGGGTNMLEQFSDKVGTKLLARVPYHELIRKSRFAGKTMFQMEDGPEKEECVKPYNEIADFLLSRNPTSSVPVPIGDRDIFEIVGGWQ.

ATP contacts are provided by residues 12–17 (GIGKST) and K41. S16 provides a ligand contact to Mg(2+). C97 and C131 together coordinate [4Fe-4S] cluster. ATP is bound at residue 182 to 183 (NR).

The protein belongs to the NifH/BchL/ChlL family. Homodimer. Protochlorophyllide reductase is composed of three subunits; BchL, BchN and BchB. It depends on [4Fe-4S] cluster as a cofactor.

It catalyses the reaction chlorophyllide a + oxidized 2[4Fe-4S]-[ferredoxin] + 2 ADP + 2 phosphate = protochlorophyllide a + reduced 2[4Fe-4S]-[ferredoxin] + 2 ATP + 2 H2O. It participates in porphyrin-containing compound metabolism; bacteriochlorophyll biosynthesis (light-independent). Component of the dark-operative protochlorophyllide reductase (DPOR) that uses Mg-ATP and reduced ferredoxin to reduce ring D of protochlorophyllide (Pchlide) to form chlorophyllide a (Chlide). This reaction is light-independent. The L component serves as a unique electron donor to the NB-component of the complex, and binds Mg-ATP. This Chlorobium phaeobacteroides (strain BS1) protein is Light-independent protochlorophyllide reductase iron-sulfur ATP-binding protein.